The chain runs to 348 residues: Dihydroorotase (348 aa).

Zn(2+) contacts are provided by His17 and His19. Residues 19–21 (HLR) and Asn45 each bind substrate. Residues Lys103, His140, and His178 each contribute to the Zn(2+) site. Lys103 carries the N6-carboxylysine modification. His140 lines the substrate pocket. Substrate is bound at residue Leu223. Residue Asp251 participates in Zn(2+) binding. Asp251 is a catalytic residue. His255 and Ala267 together coordinate substrate.

Belongs to the metallo-dependent hydrolases superfamily. DHOase family. Class II DHOase subfamily. As to quaternary structure, homodimer. Zn(2+) is required as a cofactor.

The catalysed reaction is (S)-dihydroorotate + H2O = N-carbamoyl-L-aspartate + H(+). Its pathway is pyrimidine metabolism; UMP biosynthesis via de novo pathway; (S)-dihydroorotate from bicarbonate: step 3/3. Functionally, catalyzes the reversible cyclization of carbamoyl aspartate to dihydroorotate. In Escherichia coli O7:K1 (strain IAI39 / ExPEC), this protein is Dihydroorotase.